We begin with the raw amino-acid sequence, 217 residues long: Large ribosomal subunit protein uL3 (217 aa).

Belongs to the universal ribosomal protein uL3 family. In terms of assembly, part of the 50S ribosomal subunit. Forms a cluster with proteins L14 and L19.

One of the primary rRNA binding proteins, it binds directly near the 3'-end of the 23S rRNA, where it nucleates assembly of the 50S subunit. In Mycobacterium sp. (strain KMS), this protein is Large ribosomal subunit protein uL3.